The chain runs to 177 residues: Ribulose bisphosphate carboxylase small subunit, chloroplastic (177 aa).

The transit peptide at 1-55 directs the protein to the chloroplast; the sequence is MASLMSNAAVVTASTAAQANMVAPFSGLKSTSAFPVSRKSNVDITSLATNGGRVN.

The protein belongs to the RuBisCO small chain family. Heterohexadecamer of 8 large and 8 small subunits.

It is found in the plastid. The protein resides in the chloroplast. RuBisCO catalyzes two reactions: the carboxylation of D-ribulose 1,5-bisphosphate, the primary event in carbon dioxide fixation, as well as the oxidative fragmentation of the pentose substrate. Both reactions occur simultaneously and in competition at the same active site. Although the small subunit is not catalytic it is essential for maximal activity. The polypeptide is Ribulose bisphosphate carboxylase small subunit, chloroplastic (Silene latifolia subsp. alba (White campion)).